A 277-amino-acid chain; its full sequence is Acyl-coenzyme A thioesterase MBLAC2 (277 aa).

Zn(2+) is bound by residues His-80, His-82, Asp-84, His-85, His-167, Asp-186, and His-228.

This sequence belongs to the metallo-beta-lactamase superfamily. Glyoxalase II family. The cofactor is Zn(2+).

The protein localises to the endoplasmic reticulum membrane. It is found in the cell membrane. It catalyses the reaction hexadecanoyl-CoA + H2O = hexadecanoate + CoA + H(+). It carries out the reaction dodecanoyl-CoA + H2O = dodecanoate + CoA + H(+). The enzyme catalyses tetradecanoyl-CoA + H2O = tetradecanoate + CoA + H(+). The catalysed reaction is octadecanoyl-CoA + H2O = octadecanoate + CoA + H(+). It catalyses the reaction a beta-lactam + H2O = a substituted beta-amino acid. Functionally, acyl-CoA thioesterases are a group of enzymes that catalyze the hydrolysis of acyl-CoAs to the free fatty acid and coenzyme A (CoASH), providing the potential to regulate intracellular levels of acyl-CoAs, free fatty acids and CoASH. Has an acyl-CoA thioesterase activity towards the long chain fatty acyl-CoA thioester palmitoyl-CoA (hexadecanoyl-CoA; C16:0-CoA). Displays a substrate preference for fatty acyl-CoAs with chain-lengths C12-C18. This chain is Acyl-coenzyme A thioesterase MBLAC2 (MBLAC2), found in Gallus gallus (Chicken).